We begin with the raw amino-acid sequence, 587 residues long: A-type ATP synthase subunit A (587 aa).

ATP is bound at residue 234–241 (GPFGSGKT).

It belongs to the ATPase alpha/beta chains family. As to quaternary structure, the N-terminus (approximately residues 106-122) interacts with subunit H. Has multiple subunits with at least A(3), B(3), C, D, E(1 or 2), F, H(2), I and proteolipid K(x).

The protein resides in the cell membrane. It carries out the reaction ATP + H2O + 4 H(+)(in) = ADP + phosphate + 5 H(+)(out). Its activity is regulated as follows. ATP hydrolysis is inhibited by N',N'-dicyclohexylcarbodiimide. Functionally, component of the A-type ATP synthase that produces ATP from ADP in the presence of a proton gradient across the membrane. The A chain is the catalytic subunit. Hydrolyzes ATP, GTP (86% of ATPase rate) and UTP (54% of ATPase rate), has very poor activity on CTP. The sequence is that of A-type ATP synthase subunit A from Methanocaldococcus jannaschii (strain ATCC 43067 / DSM 2661 / JAL-1 / JCM 10045 / NBRC 100440) (Methanococcus jannaschii).